We begin with the raw amino-acid sequence, 398 residues long: 1-deoxy-D-xylulose 5-phosphate reductoisomerase (398 aa).

The NADPH site is built by Thr10, Gly11, Ser12, Ile13, Gly36, Lys37, Asn38, and Asn124. Residue Lys125 participates in 1-deoxy-D-xylulose 5-phosphate binding. NADPH is bound at residue Glu126. Asp150 contacts Mn(2+). 1-deoxy-D-xylulose 5-phosphate is bound by residues Ser151, Glu152, Ser186, and His209. Glu152 is a Mn(2+) binding site. An NADPH-binding site is contributed by Gly215. Residues Ser222, Asn227, Lys228, and Glu231 each coordinate 1-deoxy-D-xylulose 5-phosphate. Glu231 contacts Mn(2+).

It belongs to the DXR family. As to quaternary structure, homodimer. The cofactor is Mg(2+). It depends on Mn(2+) as a cofactor. Co(2+) serves as cofactor.

The enzyme catalyses 2-C-methyl-D-erythritol 4-phosphate + NADP(+) = 1-deoxy-D-xylulose 5-phosphate + NADPH + H(+). It functions in the pathway isoprenoid biosynthesis; isopentenyl diphosphate biosynthesis via DXP pathway; isopentenyl diphosphate from 1-deoxy-D-xylulose 5-phosphate: step 1/6. Inhibited by fosmidomycin. Catalyzes the NADPH-dependent rearrangement and reduction of 1-deoxy-D-xylulose-5-phosphate (DXP) to 2-C-methyl-D-erythritol 4-phosphate (MEP). The chain is 1-deoxy-D-xylulose 5-phosphate reductoisomerase (dxr) from Escherichia coli (strain K12).